Consider the following 458-residue polypeptide: Sphingomyelinase DDB_G0288017 (458 aa).

The interval 91 to 111 (NKKAKSPPPPSSLKQQNLHNN) is disordered. Glutamate 135 contributes to the Mg(2+) binding site. The active-site Proton acceptor is the histidine 447.

Belongs to the neutral sphingomyelinase family. Mg(2+) is required as a cofactor.

The enzyme catalyses a sphingomyelin + H2O = phosphocholine + an N-acylsphing-4-enine + H(+). It functions in the pathway lipid metabolism; sphingolipid metabolism. In terms of biological role, catalyzes the hydrolysis of sphingomyelin to form ceramide and phosphocholine. This Dictyostelium discoideum (Social amoeba) protein is Sphingomyelinase DDB_G0288017.